We begin with the raw amino-acid sequence, 287 residues long: Nucleotide-binding protein Asuc_0930 (287 aa).

8–15 (GRSGAGKS) provides a ligand contact to ATP. 56-59 (DIRN) provides a ligand contact to GTP.

It belongs to the RapZ-like family.

Functionally, displays ATPase and GTPase activities. In Actinobacillus succinogenes (strain ATCC 55618 / DSM 22257 / CCUG 43843 / 130Z), this protein is Nucleotide-binding protein Asuc_0930.